The following is a 129-amino-acid chain: UPF0344 protein SAR0931 (129 aa).

Transmembrane regions (helical) follow at residues 1-21 (MLHL…ATYL), 36-56 (LHMV…WILI), 67-87 (MLLT…EVSI), and 99-119 (MFWI…ILPL).

It belongs to the UPF0344 family.

It localises to the cell membrane. The protein is UPF0344 protein SAR0931 of Staphylococcus aureus (strain MRSA252).